Reading from the N-terminus, the 871-residue chain is Translation initiation factor IF-2 (871 aa).

Residues 1–242 form a disordered region; the sequence is MVDTKNPGDK…PAAKPAPAKQ (242 aa). A compositionally biased stretch (low complexity) spans 68–91; the sequence is PASARTPAAKAPPARAATPAAPRA. Basic and acidic residues predominate over residues 115–174; sequence AKVRAEEERRIAEAEAARRNSKEGIEQAEREAAEARRKAEEERHRQEEEAKRKAEIEAKR. Low complexity-rich tracts occupy residues 182 to 206 and 225 to 241; these read KPAP…AVAA and ARPV…APAK. In terms of domain architecture, tr-type G spans 367-538; the sequence is PRSPVVTVMG…SLQADLLDLK (172 aa). Residues 376 to 383 are G1; it reads GHVDHGKT. Position 376-383 (376-383) interacts with GTP; sequence GHVDHGKT. Residues 401–405 are G2; it reads GITQH. The tract at residues 424 to 427 is G3; the sequence is DTPG. Residues 424 to 428 and 478 to 481 each bind GTP; these read DTPGH and NKID. Residues 478-481 form a G4 region; sequence NKID. Residues 514–516 form a G5 region; the sequence is SAK.

It belongs to the TRAFAC class translation factor GTPase superfamily. Classic translation factor GTPase family. IF-2 subfamily.

It is found in the cytoplasm. In terms of biological role, one of the essential components for the initiation of protein synthesis. Protects formylmethionyl-tRNA from spontaneous hydrolysis and promotes its binding to the 30S ribosomal subunits. Also involved in the hydrolysis of GTP during the formation of the 70S ribosomal complex. In Nitrobacter winogradskyi (strain ATCC 25391 / DSM 10237 / CIP 104748 / NCIMB 11846 / Nb-255), this protein is Translation initiation factor IF-2.